The primary structure comprises 125 residues: Large ribosomal subunit protein bL12 (125 aa).

The protein belongs to the bacterial ribosomal protein bL12 family. In terms of assembly, homodimer. Part of the ribosomal stalk of the 50S ribosomal subunit. Forms a multimeric L10(L12)X complex, where L10 forms an elongated spine to which 2 to 4 L12 dimers bind in a sequential fashion. Binds GTP-bound translation factors.

Functionally, forms part of the ribosomal stalk which helps the ribosome interact with GTP-bound translation factors. Is thus essential for accurate translation. This is Large ribosomal subunit protein bL12 from Thermoanaerobacter sp. (strain X514).